Here is a 201-residue protein sequence, read N- to C-terminus: Endoribonuclease YbeY (201 aa).

Residues His-120, His-124, and His-130 each contribute to the Zn(2+) site. A disordered region spans residues 151 to 201; sequence DGADGADGADGARGAADGAADGGEGRRGDQGRRGDQGRGGGAGEPPAAPAR. Residues 173–186 are compositionally biased toward basic and acidic residues; that stretch reads GEGRRGDQGRRGDQ.

Belongs to the endoribonuclease YbeY family. Zn(2+) serves as cofactor.

The protein localises to the cytoplasm. Its function is as follows. Single strand-specific metallo-endoribonuclease involved in late-stage 70S ribosome quality control and in maturation of the 3' terminus of the 16S rRNA. This Frankia casuarinae (strain DSM 45818 / CECT 9043 / HFP020203 / CcI3) protein is Endoribonuclease YbeY.